The chain runs to 360 residues: 3-dehydroquinate synthase (360 aa).

Residues 71 to 76, 105 to 109, 129 to 130, lysine 142, lysine 151, and 169 to 172 each bind NAD(+); these read DGEQYK, GVVGD, TT, and TLNT. The Zn(2+) site is built by glutamate 184, histidine 248, and histidine 265.

This sequence belongs to the sugar phosphate cyclases superfamily. Dehydroquinate synthase family. Co(2+) serves as cofactor. It depends on Zn(2+) as a cofactor. NAD(+) is required as a cofactor.

The protein localises to the cytoplasm. The catalysed reaction is 7-phospho-2-dehydro-3-deoxy-D-arabino-heptonate = 3-dehydroquinate + phosphate. The protein operates within metabolic intermediate biosynthesis; chorismate biosynthesis; chorismate from D-erythrose 4-phosphate and phosphoenolpyruvate: step 2/7. Functionally, catalyzes the conversion of 3-deoxy-D-arabino-heptulosonate 7-phosphate (DAHP) to dehydroquinate (DHQ). This chain is 3-dehydroquinate synthase, found in Coxiella burnetii (strain CbuK_Q154) (Coxiella burnetii (strain Q154)).